The chain runs to 196 residues: Lipoprotein signal peptidase (196 aa).

3 helical membrane passes run 17–37 (SIII…IDNL), 73–93 (SNAI…YLMI), and 96–116 (NTIG…GNLI). Residues aspartate 126 and aspartate 144 contribute to the active site. The helical transmembrane segment at 135-155 (YSFPVFNLADCFITIGVIILI) threads the bilayer.

This sequence belongs to the peptidase A8 family.

Its subcellular location is the cell inner membrane. The catalysed reaction is Release of signal peptides from bacterial membrane prolipoproteins. Hydrolyzes -Xaa-Yaa-Zaa-|-(S,diacylglyceryl)Cys-, in which Xaa is hydrophobic (preferably Leu), and Yaa (Ala or Ser) and Zaa (Gly or Ala) have small, neutral side chains.. It participates in protein modification; lipoprotein biosynthesis (signal peptide cleavage). This protein specifically catalyzes the removal of signal peptides from prolipoproteins. In Rickettsia akari (strain Hartford), this protein is Lipoprotein signal peptidase.